Here is a 383-residue protein sequence, read N- to C-terminus: Mannan endo-1,4-beta-mannosidase A (383 aa).

The first 18 residues, 1 to 18 (MKFSQALLSLASLALAAA), serve as a signal peptide directing secretion. N75 is a glycosylation site (N-linked (GlcNAc...) asparagine). Substrate is bound at residue W97. An N-linked (GlcNAc...) asparagine glycan is attached at N199. Substrate contacts are provided by residues N210 and 211 to 213 (EPR). The active-site Proton donor/acceptor is E211. An intrachain disulfide couples C214 to C217. Substrate-binding residues include Y279 and W283. An intrachain disulfide couples C301 to C308. The active-site Nucleophile is the E312. C320 and C369 are disulfide-bonded. N332 is a glycosylation site (N-linked (GlcNAc...) asparagine). A substrate-binding site is contributed by W342.

Belongs to the glycosyl hydrolase 5 (cellulase A) family. In terms of assembly, monomer.

Its subcellular location is the secreted. It carries out the reaction Random hydrolysis of (1-&gt;4)-beta-D-mannosidic linkages in mannans, galactomannans and glucomannans.. In terms of biological role, endo-1,4-mannanase that catalyzes the random hydrolysis of (1-&gt;4)-beta-D-mannosidic linkages in mannans and heteromannans. It is a crucial enzyme for depolymerization of seed galactomannans and wood galactoglucomannans. Active against locust bean gum and gum guar. Also has transglycosylation activity. The polypeptide is Mannan endo-1,4-beta-mannosidase A (manA) (Emericella nidulans (strain FGSC A4 / ATCC 38163 / CBS 112.46 / NRRL 194 / M139) (Aspergillus nidulans)).